We begin with the raw amino-acid sequence, 212 residues long: ATP phosphoribosyltransferase (212 aa).

It belongs to the ATP phosphoribosyltransferase family. Short subfamily. In terms of assembly, heteromultimer composed of HisG and HisZ subunits.

Its subcellular location is the cytoplasm. The catalysed reaction is 1-(5-phospho-beta-D-ribosyl)-ATP + diphosphate = 5-phospho-alpha-D-ribose 1-diphosphate + ATP. Its pathway is amino-acid biosynthesis; L-histidine biosynthesis; L-histidine from 5-phospho-alpha-D-ribose 1-diphosphate: step 1/9. In terms of biological role, catalyzes the condensation of ATP and 5-phosphoribose 1-diphosphate to form N'-(5'-phosphoribosyl)-ATP (PR-ATP). Has a crucial role in the pathway because the rate of histidine biosynthesis seems to be controlled primarily by regulation of HisG enzymatic activity. In Prochlorococcus marinus (strain MIT 9312), this protein is ATP phosphoribosyltransferase.